A 199-amino-acid polypeptide reads, in one-letter code: N-(5'-phosphoribosyl)anthranilate isomerase (199 aa).

This sequence belongs to the TrpF family.

The catalysed reaction is N-(5-phospho-beta-D-ribosyl)anthranilate = 1-(2-carboxyphenylamino)-1-deoxy-D-ribulose 5-phosphate. Its pathway is amino-acid biosynthesis; L-tryptophan biosynthesis; L-tryptophan from chorismate: step 3/5. The polypeptide is N-(5'-phosphoribosyl)anthranilate isomerase (Clostridium kluyveri (strain NBRC 12016)).